A 129-amino-acid polypeptide reads, in one-letter code: Small ribosomal subunit protein eS6 (129 aa).

Belongs to the eukaryotic ribosomal protein eS6 family.

This Methanocorpusculum labreanum (strain ATCC 43576 / DSM 4855 / Z) protein is Small ribosomal subunit protein eS6.